The primary structure comprises 292 residues: Phosphatidylserine decarboxylase proenzyme (292 aa).

Active-site charge relay system; for autoendoproteolytic cleavage activity residues include aspartate 92, histidine 149, and serine 256. Catalysis depends on serine 256, which acts as the Schiff-base intermediate with substrate; via pyruvic acid; for decarboxylase activity. Serine 256 carries the post-translational modification Pyruvic acid (Ser); by autocatalysis.

This sequence belongs to the phosphatidylserine decarboxylase family. PSD-B subfamily. Prokaryotic type I sub-subfamily. As to quaternary structure, heterodimer of a large membrane-associated beta subunit and a small pyruvoyl-containing alpha subunit. Pyruvate is required as a cofactor. In terms of processing, is synthesized initially as an inactive proenzyme. Formation of the active enzyme involves a self-maturation process in which the active site pyruvoyl group is generated from an internal serine residue via an autocatalytic post-translational modification. Two non-identical subunits are generated from the proenzyme in this reaction, and the pyruvate is formed at the N-terminus of the alpha chain, which is derived from the carboxyl end of the proenzyme. The autoendoproteolytic cleavage occurs by a canonical serine protease mechanism, in which the side chain hydroxyl group of the serine supplies its oxygen atom to form the C-terminus of the beta chain, while the remainder of the serine residue undergoes an oxidative deamination to produce ammonia and the pyruvoyl prosthetic group on the alpha chain. During this reaction, the Ser that is part of the protease active site of the proenzyme becomes the pyruvoyl prosthetic group, which constitutes an essential element of the active site of the mature decarboxylase.

The protein localises to the cell membrane. The catalysed reaction is a 1,2-diacyl-sn-glycero-3-phospho-L-serine + H(+) = a 1,2-diacyl-sn-glycero-3-phosphoethanolamine + CO2. It functions in the pathway phospholipid metabolism; phosphatidylethanolamine biosynthesis; phosphatidylethanolamine from CDP-diacylglycerol: step 2/2. Catalyzes the formation of phosphatidylethanolamine (PtdEtn) from phosphatidylserine (PtdSer). This chain is Phosphatidylserine decarboxylase proenzyme, found in Baumannia cicadellinicola subsp. Homalodisca coagulata.